A 487-amino-acid polypeptide reads, in one-letter code: L-asparagine permease 2 (487 aa).

12 helical membrane passes run 26–46, 50–70, 98–118, 133–153, 163–183, 214–234, 256–276, 290–310, 341–361, 369–389, 414–434, and 440–460; these read QLQM…GAGG, SAGP…FLIL, VAFV…IVDT, PIPQ…MNLI, FWAS…GTVF, IVLV…VGIA, IACF…YTAY, IGID…ALSS, TGVP…GIIL, AFEI…ATIV, SPFS…LMYF, and PWMI…WYLV.

This sequence belongs to the amino acid-polyamine-organocation (APC) superfamily. Amino acid transporter (AAT) (TC 2.A.3.1) family.

It localises to the cell membrane. Its function is as follows. Dual function in both nitrogen assimilation and in protection against acid stress during infection. Involved in asparagine uptake. The protein is L-asparagine permease 2 (ansP2) of Mycobacterium bovis (strain ATCC BAA-935 / AF2122/97).